The following is a 485-amino-acid chain: uncharacterized protein (485 aa).

It localises to the virion. This is an uncharacterized protein from Acanthamoeba polyphaga mimivirus (APMV).